Consider the following 1640-residue polypeptide: Phospholipase D C (1640 aa).

Residues 122–132 (SHRSNQSFNHS) are compositionally biased toward polar residues. Disordered regions lie at residues 122-247 (SHRS…KRLS), 264-283 (HNQN…HTTT), 439-499 (EKQQ…YKYN), and 521-541 (DDEY…PSQE). The span at 133–193 (NSTTPLNTTN…YSSDNSYLHN (61 aa)) shows a compositional bias: low complexity. Over residues 197–231 (DIYEDEDDEDDEDDDDDEDEDDEGKEFEQDDEDES) the composition is skewed to acidic residues. Positions 232–247 (TISSMSLKNSQAKRLS) are enriched in polar residues. 2 stretches are compositionally biased toward low complexity: residues 264-273 (HNQNHQNHQN) and 467-499 (TTTT…YKYN). A compositionally biased stretch (acidic residues) spans 521-534 (DDEYYYGEYDDEDD). Residues 1009-1036 (LYWSHHQKVVVVDQRIAFIGGLDLCFGR) form the PLD phosphodiesterase 1 domain. Catalysis depends on residues histidine 1014, lysine 1016, and aspartate 1021. Low complexity-rich tracts occupy residues 1149–1274 (INNN…NNLN) and 1282–1296 (HNNS…QQQQ). The tract at residues 1149 to 1315 (INNNNNNANN…YQPPLPPQQR (167 aa)) is disordered. Residues 1297 to 1306 (QHHHHHHHHY) are compositionally biased toward basic residues. The region spanning 1460–1487 (EQIYVHSKVLIVDDKIAIIGSANINDRS) is the PLD phosphodiesterase 2 domain. Catalysis depends on residues histidine 1465, lysine 1467, and aspartate 1472.

The protein belongs to the phospholipase D family.

The catalysed reaction is a 1,2-diacyl-sn-glycero-3-phosphocholine + H2O = a 1,2-diacyl-sn-glycero-3-phosphate + choline + H(+). Inhibited by butan-1-ol. Its function is as follows. Plays a role in cell growth. Hydrolyzes membrane phospholipids, such as PtdCho (phosphatidylcholine), producing the free headgroup and PtdOH (phosphatidic acid; signaling molecule on its own). Involved in the inhibition of actin-based motility and endocytosis. Its inhibition causes complete collapse of F-actin organization. The polypeptide is Phospholipase D C (pldC) (Dictyostelium discoideum (Social amoeba)).